The following is a 310-amino-acid chain: Aspartate carbamoyltransferase catalytic subunit (310 aa).

Carbamoyl phosphate contacts are provided by Arg-57 and Thr-58. Residue Lys-86 participates in L-aspartate binding. Carbamoyl phosphate contacts are provided by Arg-107, His-135, and Gln-138. L-aspartate contacts are provided by Arg-168 and Arg-229. Residues Leu-268 and Pro-269 each contribute to the carbamoyl phosphate site.

This sequence belongs to the aspartate/ornithine carbamoyltransferase superfamily. ATCase family. In terms of assembly, heterooligomer of catalytic and regulatory chains.

It carries out the reaction carbamoyl phosphate + L-aspartate = N-carbamoyl-L-aspartate + phosphate + H(+). It functions in the pathway pyrimidine metabolism; UMP biosynthesis via de novo pathway; (S)-dihydroorotate from bicarbonate: step 2/3. Its function is as follows. Catalyzes the condensation of carbamoyl phosphate and aspartate to form carbamoyl aspartate and inorganic phosphate, the committed step in the de novo pyrimidine nucleotide biosynthesis pathway. The protein is Aspartate carbamoyltransferase catalytic subunit of Thermococcus onnurineus (strain NA1).